Consider the following 658-residue polypeptide: Probable rhamnogalacturonate lyase B (658 aa).

The first 19 residues, 1–19 (MRFAIPLGAACAWAGVALA), serve as a signal peptide directing secretion. N-linked (GlcNAc...) asparagine glycosylation is found at asparagine 110, asparagine 143, asparagine 239, asparagine 280, asparagine 522, asparagine 530, asparagine 592, and asparagine 633.

Belongs to the polysaccharide lyase 4 family.

Its subcellular location is the secreted. The enzyme catalyses Endotype eliminative cleavage of L-alpha-rhamnopyranosyl-(1-&gt;4)-alpha-D-galactopyranosyluronic acid bonds of rhamnogalacturonan I domains in ramified hairy regions of pectin leaving L-rhamnopyranose at the reducing end and 4-deoxy-4,5-unsaturated D-galactopyranosyluronic acid at the non-reducing end.. Functionally, pectinolytic enzymes consist of four classes of enzymes: pectin lyase, polygalacturonase, pectin methylesterase and rhamnogalacturonase. Degrades the rhamnogalacturonan I (RG-I) backbone of pectin. The protein is Probable rhamnogalacturonate lyase B (rglB) of Aspergillus fumigatus (strain CBS 144.89 / FGSC A1163 / CEA10) (Neosartorya fumigata).